A 546-amino-acid chain; its full sequence is CTP synthase (546 aa).

The amidoligase domain stretch occupies residues Met1–Ile269. Residue Ser17 participates in CTP binding. Ser17 is a UTP binding site. ATP-binding positions include Ser18–Leu23 and Asp75. The Mg(2+) site is built by Asp75 and Glu143. Residues Asp150–Glu152, Lys190–Gln195, and Lys226 each bind CTP. Residues Lys190–Gln195 and Lys226 contribute to the UTP site. A Glutamine amidotransferase type-1 domain is found at Arg295 to Ala537. Residue Gly357 coordinates L-glutamine. The Nucleophile; for glutamine hydrolysis role is filled by Cys384. Residues Leu385–Gln388, Glu408, and Arg465 each bind L-glutamine. Catalysis depends on residues His510 and Glu512.

The protein belongs to the CTP synthase family. In terms of assembly, homotetramer.

The enzyme catalyses UTP + L-glutamine + ATP + H2O = CTP + L-glutamate + ADP + phosphate + 2 H(+). It carries out the reaction L-glutamine + H2O = L-glutamate + NH4(+). It catalyses the reaction UTP + NH4(+) + ATP = CTP + ADP + phosphate + 2 H(+). Its pathway is pyrimidine metabolism; CTP biosynthesis via de novo pathway; CTP from UDP: step 2/2. Allosterically activated by GTP, when glutamine is the substrate; GTP has no effect on the reaction when ammonia is the substrate. The allosteric effector GTP functions by stabilizing the protein conformation that binds the tetrahedral intermediate(s) formed during glutamine hydrolysis. Inhibited by the product CTP, via allosteric rather than competitive inhibition. In terms of biological role, catalyzes the ATP-dependent amination of UTP to CTP with either L-glutamine or ammonia as the source of nitrogen. Regulates intracellular CTP levels through interactions with the four ribonucleotide triphosphates. The protein is CTP synthase of Myxococcus xanthus (strain DK1622).